The chain runs to 1083 residues: Carbamoyl phosphate synthase large chain (1083 aa).

The segment at 1 to 402 (MPKRTDIRKV…AYMKALRSME (402 aa)) is carboxyphosphate synthetic domain. Residues Arg129, Arg169, Gly175, Gly176, Glu208, Val210, Glu215, Gly241, Val242, His243, Gln285, and Glu299 each contribute to the ATP site. Positions 133–328 (KAAMQKIGVA…IAKIAAKLAL (196 aa)) constitute an ATP-grasp 1 domain. Mg(2+) is bound by residues Gln285, Glu299, and Asn301. Mn(2+) contacts are provided by Gln285, Glu299, and Asn301. Residues 403–554 (LGRVGLESPE…YSTYEEEDEA (152 aa)) are oligomerization domain. The interval 555–937 (PPTDRQKVLI…AFAKSQLAAG (383 aa)) is carbamoyl phosphate synthetic domain. One can recognise an ATP-grasp 2 domain in the interval 679–871 (AALIEKLGLK…MAKIAALCMV (193 aa)). ATP contacts are provided by Arg715, Arg754, Leu756, Glu761, Gly787, Val788, His789, Ser790, Gln830, and Glu842. Residues Gln830, Glu842, and Asn844 each contribute to the Mg(2+) site. Gln830, Glu842, and Asn844 together coordinate Mn(2+). Residues 938-1078 (VKLPKSGKVF…QEYLGINAAP (141 aa)) form the MGS-like domain. An allosteric domain region spans residues 938-1083 (VKLPKSGKVF…INAAPPGTRR (146 aa)).

This sequence belongs to the CarB family. As to quaternary structure, composed of two chains; the small (or glutamine) chain promotes the hydrolysis of glutamine to ammonia, which is used by the large (or ammonia) chain to synthesize carbamoyl phosphate. Tetramer of heterodimers (alpha,beta)4. Requires Mg(2+) as cofactor. It depends on Mn(2+) as a cofactor.

It carries out the reaction hydrogencarbonate + L-glutamine + 2 ATP + H2O = carbamoyl phosphate + L-glutamate + 2 ADP + phosphate + 2 H(+). It catalyses the reaction hydrogencarbonate + NH4(+) + 2 ATP = carbamoyl phosphate + 2 ADP + phosphate + 2 H(+). Its pathway is amino-acid biosynthesis; L-arginine biosynthesis; carbamoyl phosphate from bicarbonate: step 1/1. It functions in the pathway pyrimidine metabolism; UMP biosynthesis via de novo pathway; (S)-dihydroorotate from bicarbonate: step 1/3. Large subunit of the glutamine-dependent carbamoyl phosphate synthetase (CPSase). CPSase catalyzes the formation of carbamoyl phosphate from the ammonia moiety of glutamine, carbonate, and phosphate donated by ATP, constituting the first step of 2 biosynthetic pathways, one leading to arginine and/or urea and the other to pyrimidine nucleotides. The large subunit (synthetase) binds the substrates ammonia (free or transferred from glutamine from the small subunit), hydrogencarbonate and ATP and carries out an ATP-coupled ligase reaction, activating hydrogencarbonate by forming carboxy phosphate which reacts with ammonia to form carbamoyl phosphate. This chain is Carbamoyl phosphate synthase large chain, found in Myxococcus xanthus (strain DK1622).